The following is a 620-amino-acid chain: 1-deoxy-D-xylulose-5-phosphate synthase (620 aa).

Thiamine diphosphate-binding positions include histidine 80 and 121 to 123 (GHS). Residue aspartate 152 participates in Mg(2+) binding. Thiamine diphosphate contacts are provided by residues 153–154 (GA), asparagine 181, tyrosine 288, and glutamate 370. Residue asparagine 181 coordinates Mg(2+).

It belongs to the transketolase family. DXPS subfamily. In terms of assembly, homodimer. The cofactor is Mg(2+). It depends on thiamine diphosphate as a cofactor.

The enzyme catalyses D-glyceraldehyde 3-phosphate + pyruvate + H(+) = 1-deoxy-D-xylulose 5-phosphate + CO2. It participates in metabolic intermediate biosynthesis; 1-deoxy-D-xylulose 5-phosphate biosynthesis; 1-deoxy-D-xylulose 5-phosphate from D-glyceraldehyde 3-phosphate and pyruvate: step 1/1. In terms of biological role, catalyzes the acyloin condensation reaction between C atoms 2 and 3 of pyruvate and glyceraldehyde 3-phosphate to yield 1-deoxy-D-xylulose-5-phosphate (DXP). This chain is 1-deoxy-D-xylulose-5-phosphate synthase, found in Salmonella choleraesuis (strain SC-B67).